A 381-amino-acid polypeptide reads, in one-letter code: Succinyl-diaminopimelate desuccinylase (381 aa).

Position 71 (histidine 71) interacts with Zn(2+). Aspartate 73 is a catalytic residue. Aspartate 104 contacts Zn(2+). The Proton acceptor role is filled by glutamate 138. The Zn(2+) site is built by glutamate 139, glutamate 167, and histidine 353.

The protein belongs to the peptidase M20A family. DapE subfamily. In terms of assembly, homodimer. Zn(2+) serves as cofactor. The cofactor is Co(2+).

It catalyses the reaction N-succinyl-(2S,6S)-2,6-diaminopimelate + H2O = (2S,6S)-2,6-diaminopimelate + succinate. It participates in amino-acid biosynthesis; L-lysine biosynthesis via DAP pathway; LL-2,6-diaminopimelate from (S)-tetrahydrodipicolinate (succinylase route): step 3/3. Catalyzes the hydrolysis of N-succinyl-L,L-diaminopimelic acid (SDAP), forming succinate and LL-2,6-diaminopimelate (DAP), an intermediate involved in the bacterial biosynthesis of lysine and meso-diaminopimelic acid, an essential component of bacterial cell walls. The sequence is that of Succinyl-diaminopimelate desuccinylase from Shewanella piezotolerans (strain WP3 / JCM 13877).